A 312-amino-acid polypeptide reads, in one-letter code: Probable N-glycosylase/DNA lyase (312 aa).

A disordered region spans residues 1-22; that stretch reads MRIPVGDFDLEMTQRSGQTSQP. A compositionally biased stretch (polar residues) spans 13 to 22; it reads TQRSGQTSQP. The active site involves Lys-235.

Belongs to the type-1 OGG1 family.

It carries out the reaction 2'-deoxyribonucleotide-(2'-deoxyribose 5'-phosphate)-2'-deoxyribonucleotide-DNA = a 3'-end 2'-deoxyribonucleotide-(2,3-dehydro-2,3-deoxyribose 5'-phosphate)-DNA + a 5'-end 5'-phospho-2'-deoxyribonucleoside-DNA + H(+). Its function is as follows. DNA repair enzyme that incises DNA at 8-oxoG residues. Excises 7,8-dihydro-8-oxoguanine and 2,6-diamino-4-hydroxy-5-N-methylformamidopyrimidine (FAPY) from damaged DNA. Has a beta-lyase activity that nicks DNA 3' to the lesion. In Methanothermobacter thermautotrophicus (strain ATCC 29096 / DSM 1053 / JCM 10044 / NBRC 100330 / Delta H) (Methanobacterium thermoautotrophicum), this protein is Probable N-glycosylase/DNA lyase.